We begin with the raw amino-acid sequence, 703 residues long: Calpain-8 (703 aa).

A Calpain catalytic domain is found at 45–344 (LFKDPEFPAC…YSRLEICNLS (300 aa)). Active-site residues include Cys-105, His-262, and Asn-286. Residues 355–512 (KWNLVLFNGR…VFSEKKAKAL (158 aa)) are domain III. The linker stretch occupies residues 513-531 (EIGDTVSGHPHEPHPRDMD). 4 consecutive EF-hand domains span residues 532 to 566 (EEDE…VLSK), 575 to 608 (FNIN…LKIR), 605 to 640 (LKIR…AGFT), and 670 to 703 (IRLE…CVLV). The tract at residues 532-703 (EEDEHVRSLF…LAEWLCCVLV (172 aa)) is domain IV. Residues Asp-588, Asp-590, Thr-592, Ser-594, Glu-599, Asp-618, Asn-620, Thr-624, and Glu-629 each coordinate Ca(2+).

It belongs to the peptidase C2 family. As to quaternary structure, monomer and homooligomer. Interacts with COPS1/GPS1, COPB1, EYA2, NME2, NME4 and TOMM70. The cofactor is Ca(2+). Undergoes autolytic cleavage between Ala-5 and Ala-6 which gives rise to fragments extending from Ala-6 to the C-terminus, Ala-6 to the EF-hand 2 domain and from Ala-6 to the beginning of domain III. As to expression, predominantly expressed in the stomach. Localizes strictly to the surface mucus cells in the gastric epithelium and the mucus-secreting goblet cells in the duodenum. Detected in the pituitary after estrogen stimulation.

The protein resides in the cytoplasm. It localises to the golgi apparatus. The catalysed reaction is Broad endopeptidase specificity.. Functionally, calcium-regulated non-lysosomal thiol-protease. Involved in membrane trafficking in the gastric surface mucus cells (pit cells) and may involve the membrane trafficking of mucus cells via interactions with coat protein. Proteolytically cleaves the beta-subunit of coatomer complex. The protein is Calpain-8 (Capn8) of Rattus norvegicus (Rat).